The primary structure comprises 417 residues: Serine hydroxymethyltransferase (417 aa).

(6S)-5,6,7,8-tetrahydrofolate contacts are provided by residues leucine 121 and 125–127 (GHL). Lysine 229 is subject to N6-(pyridoxal phosphate)lysine. 355-357 (SPF) is a (6S)-5,6,7,8-tetrahydrofolate binding site.

It belongs to the SHMT family. As to quaternary structure, homodimer. Pyridoxal 5'-phosphate serves as cofactor.

The protein resides in the cytoplasm. It catalyses the reaction (6R)-5,10-methylene-5,6,7,8-tetrahydrofolate + glycine + H2O = (6S)-5,6,7,8-tetrahydrofolate + L-serine. It participates in one-carbon metabolism; tetrahydrofolate interconversion. It functions in the pathway amino-acid biosynthesis; glycine biosynthesis; glycine from L-serine: step 1/1. Functionally, catalyzes the reversible interconversion of serine and glycine with tetrahydrofolate (THF) serving as the one-carbon carrier. This reaction serves as the major source of one-carbon groups required for the biosynthesis of purines, thymidylate, methionine, and other important biomolecules. Also exhibits THF-independent aldolase activity toward beta-hydroxyamino acids, producing glycine and aldehydes, via a retro-aldol mechanism. The polypeptide is Serine hydroxymethyltransferase (Sodalis glossinidius (strain morsitans)).